Consider the following 25-residue polypeptide: Panurgine K (25 aa).

2 disulfide bridges follow: cysteine 8–cysteine 23 and cysteine 11–cysteine 19.

The protein localises to the target cell membrane. Its subcellular location is the secreted. Its function is as follows. Antimicrobial peptide active against Gram-positive bacteria M.luteus (MIC=1.6 uM) and B.subtilis (MIC=3.3 uM). Less active against Gram-negative bacteria E.coli (MIC=63.3 uM) and yeast C.albicans (MIC=24.2 uM). Not active against S.aureus and P.aeruginosa. Has no hemolytic activity against human erythrocytes. Probably acts by disrupting membranes of target cells. The sequence is that of Panurgine K from Panurgus calcaratus (Solitary bee).